The chain runs to 142 residues: Large ribosomal subunit protein uL13 (142 aa).

This sequence belongs to the universal ribosomal protein uL13 family. Part of the 50S ribosomal subunit.

This protein is one of the early assembly proteins of the 50S ribosomal subunit, although it is not seen to bind rRNA by itself. It is important during the early stages of 50S assembly. This chain is Large ribosomal subunit protein uL13, found in Shigella boydii serotype 18 (strain CDC 3083-94 / BS512).